The sequence spans 759 residues: Subtilisin-like protease SBT3.16 (759 aa).

A signal peptide spans 1–33 (MELSSLIVPNNKKHFVVVFIGLVLIFKIALITA). The propeptide at 34 to 119 (ANEKSQIYTV…VTRSKNMKLK (86 aa)) is activation peptide. Positions 41–118 (YTVHLGERQH…RVTRSKNMKL (78 aa)) constitute an Inhibitor I9 domain. The region spanning 124–608 (SDYLGLTSAA…GGLVNPVKVA (485 aa)) is the Peptidase S8 domain. The active-site Charge relay system is aspartate 153. Asparagine 186 and asparagine 209 each carry an N-linked (GlcNAc...) asparagine glycan. Residue histidine 229 is the Charge relay system of the active site. The N-linked (GlcNAc...) asparagine glycan is linked to asparagine 371. The active-site Charge relay system is the serine 539. 2 N-linked (GlcNAc...) asparagine glycosylation sites follow: asparagine 632 and asparagine 711.

The protein belongs to the peptidase S8 family.

Its subcellular location is the secreted. This chain is Subtilisin-like protease SBT3.16, found in Arabidopsis thaliana (Mouse-ear cress).